The chain runs to 130 residues: Large ribosomal subunit protein bL19 (130 aa).

The protein belongs to the bacterial ribosomal protein bL19 family.

In terms of biological role, this protein is located at the 30S-50S ribosomal subunit interface and may play a role in the structure and function of the aminoacyl-tRNA binding site. This Cupriavidus metallidurans (strain ATCC 43123 / DSM 2839 / NBRC 102507 / CH34) (Ralstonia metallidurans) protein is Large ribosomal subunit protein bL19.